Consider the following 360-residue polypeptide: CLIP domain-containing serine protease B4 (360 aa).

The signal sequence occupies residues 1 to 24; the sequence is MIGNRVINLLIVATLALAGQTVLA. The region spanning 30–83 is the Clip domain; it reads DCVNPVGEAGKCVLFRECQPLVDIYNKPVNTPDDTQFLTESRCGLYERKTLVCC. 4 disulfide bridges follow: Cys31/Cys82, Cys41/Cys72, Cys47/Cys83, and Cys138/Cys154. Residues 108–360 enclose the Peptidase S1 domain; the sequence is VIGGQPTKID…YVDWIKDNIY (253 aa). Catalysis depends on charge relay system residues His153 and Asp213. The N-linked (GlcNAc...) asparagine glycan is linked to Asn224. 2 cysteine pairs are disulfide-bonded: Cys280–Cys297 and Cys307–Cys336. Ser311 functions as the Charge relay system in the catalytic mechanism.

This sequence belongs to the peptidase S1 family. CLIP subfamily. In terms of assembly, interacts with SRPN2 in the hemolymph of immune-challenged female mosquitoes; the interaction results in CLIPB4 inhibition. In terms of tissue distribution, in females, expressed in fat body, cuticle, thorax and ovaries.

Its subcellular location is the secreted. Serine protease which plays a role in the innate immune response against protozoan and bacterial pathogens, such as Plasmodium bergei, Staphylococcus aureus, Micrococcus luteus and Escherichia coli, by activating the melanization cascade. Cleaves and activates CLIPB8. In the resistant strain L3-5, involved in the melanization of killed parasite P.berghei ookinetes which results in their clearance. In the susceptible strain G3, appears to be dispensable for ookinete elimination which occurs by lysis. This Anopheles gambiae (African malaria mosquito) protein is CLIP domain-containing serine protease B4.